The primary structure comprises 508 residues: Mevalonate kinase ERG12 (508 aa).

Residues 1–46 (MPPSNPAMVNGLNGSHANGNGNGHNHISDSGSETSGESSNGSGRRR) form a disordered region. The span at 10–42 (NGLNGSHANGNGNGHNHISDSGSETSGESSNGS) shows a compositional bias: low complexity. ATP contacts are provided by residues K68, S200, and 205–211 (GAGLGSS). Mg(2+) contacts are provided by S211 and E256. D267 serves as the catalytic Proton acceptor.

It belongs to the GHMP kinase family. Mevalonate kinase subfamily. In terms of assembly, homodimer. The cofactor is Mg(2+).

It localises to the cytoplasm. It is found in the cytosol. It carries out the reaction (R)-mevalonate + ATP = (R)-5-phosphomevalonate + ADP + H(+). It functions in the pathway isoprenoid biosynthesis; isopentenyl diphosphate biosynthesis via mevalonate pathway; isopentenyl diphosphate from (R)-mevalonate: step 1/3. Mevalonate kinase; part of the second module of ergosterol biosynthesis pathway that includes the middle steps of the pathway. ERG12 converts mevalonate into 5-phosphomevalonate. The second module is carried out in the vacuole and involves the formation of farnesyl diphosphate, which is also an important intermediate in the biosynthesis of ubiquinone, dolichol, heme and prenylated proteins. Activity by the mevalonate kinase ERG12 (FG05912) first converts mevalonate into 5-phosphomevalonate. 5-phosphomevalonate is then further converted to 5-diphosphomevalonate by the phosphomevalonate kinase ERG8 (FG09764). The diphosphomevalonate decarboxylase ERG19 (FG10424) then produces isopentenyl diphosphate. The isopentenyl-diphosphate delta-isomerase IDI1 (FG09722) then catalyzes the 1,3-allylic rearrangement of the homoallylic substrate isopentenyl (IPP) to its highly electrophilic allylic isomer, dimethylallyl diphosphate (DMAPP). Finally the farnesyl diphosphate synthase ERG20 (FG06784) catalyzes the sequential condensation of isopentenyl pyrophosphate with dimethylallyl pyrophosphate, and then with the resultant geranylpyrophosphate to the ultimate product farnesyl pyrophosphate. The protein is Mevalonate kinase ERG12 of Gibberella zeae (strain ATCC MYA-4620 / CBS 123657 / FGSC 9075 / NRRL 31084 / PH-1) (Wheat head blight fungus).